A 393-amino-acid polypeptide reads, in one-letter code: Formate-dependent phosphoribosylglycinamide formyltransferase (393 aa).

N(1)-(5-phospho-beta-D-ribosyl)glycinamide-binding positions include 22-23 (EL) and Glu-82. Residues Arg-114, Lys-155, 160–165 (SSGKGQ), 195–198 (EGFV), and Glu-203 contribute to the ATP site. The 190-residue stretch at 119-308 (RLAAEDLGIP…EFALHLRAIL (190 aa)) folds into the ATP-grasp domain. Residues Glu-267 and Glu-279 each coordinate Mg(2+). N(1)-(5-phospho-beta-D-ribosyl)glycinamide is bound by residues Asp-286, Lys-356, and 363–364 (RR).

It belongs to the PurK/PurT family. Homodimer.

It carries out the reaction N(1)-(5-phospho-beta-D-ribosyl)glycinamide + formate + ATP = N(2)-formyl-N(1)-(5-phospho-beta-D-ribosyl)glycinamide + ADP + phosphate + H(+). It participates in purine metabolism; IMP biosynthesis via de novo pathway; N(2)-formyl-N(1)-(5-phospho-D-ribosyl)glycinamide from N(1)-(5-phospho-D-ribosyl)glycinamide (formate route): step 1/1. Involved in the de novo purine biosynthesis. Catalyzes the transfer of formate to 5-phospho-ribosyl-glycinamide (GAR), producing 5-phospho-ribosyl-N-formylglycinamide (FGAR). Formate is provided by PurU via hydrolysis of 10-formyl-tetrahydrofolate. The protein is Formate-dependent phosphoribosylglycinamide formyltransferase of Hydrogenovibrio crunogenus (strain DSM 25203 / XCL-2) (Thiomicrospira crunogena).